Reading from the N-terminus, the 759-residue chain is Phosphoribosylformylglycinamidine synthase subunit PurL (759 aa).

The active site involves histidine 46. Tyrosine 49 and lysine 88 together coordinate ATP. Position 90 (glutamate 90) interacts with Mg(2+). Substrate is bound by residues 91-94 (SHNH) and arginine 113. Residue histidine 92 is the Proton acceptor of the active site. Aspartate 114 contacts Mg(2+). Glutamine 237 lines the substrate pocket. Aspartate 265 serves as a coordination point for Mg(2+). Residue 309–311 (ESQ) coordinates substrate. Residues aspartate 498 and glycine 535 each contribute to the ATP site. Asparagine 536 provides a ligand contact to Mg(2+). A substrate-binding site is contributed by serine 538.

Belongs to the FGAMS family. Monomer. Part of the FGAM synthase complex composed of 1 PurL, 1 PurQ and 2 PurS subunits.

Its subcellular location is the cytoplasm. The catalysed reaction is N(2)-formyl-N(1)-(5-phospho-beta-D-ribosyl)glycinamide + L-glutamine + ATP + H2O = 2-formamido-N(1)-(5-O-phospho-beta-D-ribosyl)acetamidine + L-glutamate + ADP + phosphate + H(+). It functions in the pathway purine metabolism; IMP biosynthesis via de novo pathway; 5-amino-1-(5-phospho-D-ribosyl)imidazole from N(2)-formyl-N(1)-(5-phospho-D-ribosyl)glycinamide: step 1/2. Its function is as follows. Part of the phosphoribosylformylglycinamidine synthase complex involved in the purines biosynthetic pathway. Catalyzes the ATP-dependent conversion of formylglycinamide ribonucleotide (FGAR) and glutamine to yield formylglycinamidine ribonucleotide (FGAM) and glutamate. The FGAM synthase complex is composed of three subunits. PurQ produces an ammonia molecule by converting glutamine to glutamate. PurL transfers the ammonia molecule to FGAR to form FGAM in an ATP-dependent manner. PurS interacts with PurQ and PurL and is thought to assist in the transfer of the ammonia molecule from PurQ to PurL. This Anaeromyxobacter sp. (strain K) protein is Phosphoribosylformylglycinamidine synthase subunit PurL.